The following is a 122-amino-acid chain: Large ribosomal subunit protein uL14 (122 aa).

It belongs to the universal ribosomal protein uL14 family. Part of the 50S ribosomal subunit. Forms a cluster with proteins L3 and L19. In the 70S ribosome, L14 and L19 interact and together make contacts with the 16S rRNA in bridges B5 and B8.

Functionally, binds to 23S rRNA. Forms part of two intersubunit bridges in the 70S ribosome. This Alkaliphilus oremlandii (strain OhILAs) (Clostridium oremlandii (strain OhILAs)) protein is Large ribosomal subunit protein uL14.